The chain runs to 473 residues: Trehalose-6-phosphate synthase (473 aa).

A D-glucose 6-phosphate-binding site is contributed by Arg10. 21 to 22 (GG) is a binding site for UDP-alpha-D-glucose. Residues Tyr76 and Asp130 each coordinate D-glucose 6-phosphate. UDP-alpha-D-glucose is bound by residues Arg262 and Lys267. D-glucose 6-phosphate is bound at residue Arg300. UDP-alpha-D-glucose is bound by residues Phe339 and 365–369 (LVAKE). Residues 454-473 (TPRSPERQQQNNVATFPKLA) are disordered.

Belongs to the glycosyltransferase 20 family. Homotetramer.

It catalyses the reaction D-glucose 6-phosphate + UDP-alpha-D-glucose = alpha,alpha-trehalose 6-phosphate + UDP + H(+). Its pathway is glycan biosynthesis; trehalose biosynthesis. Its function is as follows. Probably involved in the osmoprotection via the biosynthesis of trehalose. Catalyzes the transfer of glucose from UDP-alpha-D-glucose (UDP-Glc) to D-glucose 6-phosphate (Glc-6-P) to form trehalose-6-phosphate. Acts with retention of the anomeric configuration of the UDP-sugar donor. The sequence is that of Trehalose-6-phosphate synthase from Salmonella choleraesuis (strain SC-B67).